The primary structure comprises 458 residues: Probable Xaa-Pro aminopeptidase pepP (458 aa).

The Mn(2+) site is built by aspartate 254, aspartate 265, glutamate 388, and glutamate 428.

The protein belongs to the peptidase M24B family. Mn(2+) is required as a cofactor.

It carries out the reaction Release of any N-terminal amino acid, including proline, that is linked to proline, even from a dipeptide or tripeptide.. Catalyzes the removal of a penultimate prolyl residue from the N-termini of peptides. The protein is Probable Xaa-Pro aminopeptidase pepP (pepP) of Botryotinia fuckeliana (strain B05.10) (Noble rot fungus).